The sequence spans 274 residues: RsbT co-antagonist protein RsbRA (274 aa).

Positions 150-265 constitute an STAS domain; the sequence is SAPLIPVFEN…KGIQTALEMT (116 aa). Phosphothreonine occurs at positions 171 and 205.

In terms of assembly, interacts with RsbRB and RsbS in the stressosome. The stressosome probably also contains RsbRC and RsbRD. In terms of processing, phosphorylated by RsbT. This threonine phosphorylation abrogates the ability of RsbRA to stimulate RsbT in vitro.

In terms of biological role, acts as a positive regulator of sigma-B activity in response to salt and heat stress by stimulating the activity of the RsbT kinase toward RsbS in vitro. Its function is as follows. One of 4 functionally non-identical RsbR paralogs, it functions in the environmental signaling branch of the general stress response. Negative regulator of sigma-B activity. Non-phosphorylated RsbS binds to RsbT, preventing its association with RsbU. Requires any one of RsbRA, RsbRB, RsbRC or RsbRD to sequester RsbT. When RsbS and the RsbR paralog(s) are phosphorylated, they release RsbT, which can then bind and activate RsbU. In Bacillus subtilis (strain 168), this protein is RsbT co-antagonist protein RsbRA (rsbRA).